The following is a 479-amino-acid chain: Ribulose bisphosphate carboxylase large chain (479 aa).

A propeptide spanning residues 1 to 2 (MS) is cleaved from the precursor. Positions 123 and 173 each coordinate substrate. The active-site Proton acceptor is the lysine 175. Substrate is bound at residue lysine 177. The Mg(2+) site is built by lysine 201, aspartate 203, and glutamate 204. Lysine 201 is modified (N6-carboxylysine). Phosphoserine is present on serine 208. The active-site Proton acceptor is the histidine 294. 2 residues coordinate substrate: arginine 295 and histidine 327. A Phosphothreonine modification is found at threonine 330. Substrate is bound at residue serine 379.

The protein belongs to the RuBisCO large chain family. Type I subfamily. As to quaternary structure, heterohexadecamer of 8 large chains and 8 small chains; disulfide-linked. The disulfide link is formed within the large subunit homodimers. It depends on Mg(2+) as a cofactor. The disulfide bond which can form in the large chain dimeric partners within the hexadecamer appears to be associated with oxidative stress and protein turnover.

The protein localises to the plastid. Its subcellular location is the chloroplast. The enzyme catalyses 2 (2R)-3-phosphoglycerate + 2 H(+) = D-ribulose 1,5-bisphosphate + CO2 + H2O. It carries out the reaction D-ribulose 1,5-bisphosphate + O2 = 2-phosphoglycolate + (2R)-3-phosphoglycerate + 2 H(+). Its function is as follows. RuBisCO catalyzes two reactions: the carboxylation of D-ribulose 1,5-bisphosphate, the primary event in carbon dioxide fixation, as well as the oxidative fragmentation of the pentose substrate in the photorespiration process. Both reactions occur simultaneously and in competition at the same active site. This is Ribulose bisphosphate carboxylase large chain from Arabis hirsuta (Hairy rock-cress).